The sequence spans 100 residues: Large ribosomal subunit protein uL23 (100 aa).

It belongs to the universal ribosomal protein uL23 family. Part of the 50S ribosomal subunit. Contacts protein L29, and trigger factor when it is bound to the ribosome.

One of the early assembly proteins it binds 23S rRNA. One of the proteins that surrounds the polypeptide exit tunnel on the outside of the ribosome. Forms the main docking site for trigger factor binding to the ribosome. The protein is Large ribosomal subunit protein uL23 of Prochlorococcus marinus (strain MIT 9301).